We begin with the raw amino-acid sequence, 288 residues long: Ankyrin repeat and SOCS box protein 8 (288 aa).

Ser17 bears the Phosphoserine mark. 4 ANK repeats span residues 52 to 81, 85 to 113, 117 to 146, and 150 to 179; these read GTLK…EVNA, YNRT…NPNA, NRDT…SVNA, and NNDT…EVRV. The 54-residue stretch at 235–288 folds into the SOCS box domain; the sequence is QLCEKLTVLCSAPGTLKTLARYAVRRSLGLQYLPDAVKGLPLPVSLKDYLLLLE.

Belongs to the ankyrin SOCS box (ASB) family. As to quaternary structure, interacts with TBK1; this interaction promotes TBK1 proteasomal degradation. Phosphorylated by TBK1.

It is found in the cytoplasm. The protein operates within protein modification; protein ubiquitination. In terms of biological role, may be a substrate-recognition component of a SCF-like ECS (Elongin-Cullin-SOCS-box protein) E3 ubiquitin-protein ligase complex which mediates the ubiquitination and subsequent proteasomal degradation of target proteins. Inhibits IFN-beta production through the IRF3 signaling pathway by targeting TBK1 via 'Lys-48'-linked ubiquitination, leading to its proteasomal degradation. This Mus musculus (Mouse) protein is Ankyrin repeat and SOCS box protein 8 (Asb8).